The following is a 365-amino-acid chain: Anhydro-N-acetylmuramic acid kinase (365 aa).

ATP is bound at residue 9 to 16 (GTSLDGVD).

It belongs to the anhydro-N-acetylmuramic acid kinase family.

The enzyme catalyses 1,6-anhydro-N-acetyl-beta-muramate + ATP + H2O = N-acetyl-D-muramate 6-phosphate + ADP + H(+). It functions in the pathway amino-sugar metabolism; 1,6-anhydro-N-acetylmuramate degradation. Its pathway is cell wall biogenesis; peptidoglycan recycling. Functionally, catalyzes the specific phosphorylation of 1,6-anhydro-N-acetylmuramic acid (anhMurNAc) with the simultaneous cleavage of the 1,6-anhydro ring, generating MurNAc-6-P. Is required for the utilization of anhMurNAc either imported from the medium or derived from its own cell wall murein, and thus plays a role in cell wall recycling. The sequence is that of Anhydro-N-acetylmuramic acid kinase from Zymomonas mobilis subsp. mobilis (strain ATCC 31821 / ZM4 / CP4).